We begin with the raw amino-acid sequence, 194 residues long: Nucleoside triphosphate pyrophosphatase (194 aa).

Aspartate 68 (proton acceptor) is an active-site residue.

This sequence belongs to the Maf family. A divalent metal cation serves as cofactor.

Its subcellular location is the cytoplasm. The catalysed reaction is a ribonucleoside 5'-triphosphate + H2O = a ribonucleoside 5'-phosphate + diphosphate + H(+). It catalyses the reaction a 2'-deoxyribonucleoside 5'-triphosphate + H2O = a 2'-deoxyribonucleoside 5'-phosphate + diphosphate + H(+). Functionally, nucleoside triphosphate pyrophosphatase. May have a dual role in cell division arrest and in preventing the incorporation of modified nucleotides into cellular nucleic acids. The chain is Nucleoside triphosphate pyrophosphatase from Corynebacterium jeikeium (strain K411).